A 914-amino-acid chain; its full sequence is Alanine--tRNA ligase (914 aa).

Zn(2+) is bound by residues His-613, His-617, Cys-717, and His-721.

Belongs to the class-II aminoacyl-tRNA synthetase family. Zn(2+) is required as a cofactor.

Its subcellular location is the cytoplasm. It carries out the reaction tRNA(Ala) + L-alanine + ATP = L-alanyl-tRNA(Ala) + AMP + diphosphate. Its function is as follows. Catalyzes the attachment of alanine to tRNA(Ala) in a two-step reaction: alanine is first activated by ATP to form Ala-AMP and then transferred to the acceptor end of tRNA(Ala). Also edits incorrectly charged Ser-tRNA(Ala) and Gly-tRNA(Ala) via its editing domain. In Pyrococcus abyssi (strain GE5 / Orsay), this protein is Alanine--tRNA ligase.